The primary structure comprises 340 residues: Peroxisomal adenine nucleotide transporter 1 (340 aa).

Solcar repeat units follow at residues 4-119, 133-218, and 236-320; these read ENAV…VRKH, FSTP…LREA, and LSPG…LTKM. The next 6 membrane-spanning stretches (helical) occupy residues 6 to 26, 96 to 116, 139 to 159, 190 to 210, 242 to 262, and 293 to 313; these read AVIGATASSLANIAVYPLDLA, GSSTVAGFIQSFSYFFWYTLV, LVLGIVAAATSQLFVNPINVV, GFWAGLKVSLVLTVNPSITYA, FVMGVLSKIVSTVLTQPLIIA, and WKGLGPQITKGVLVQGLLFMF.

Belongs to the mitochondrial carrier (TC 2.A.29) family.

It localises to the peroxisome membrane. In terms of biological role, adenine nucleotide transporter involved in the uniport of ATP and adenine nucleotide hetero-exchange transport between the cytosol and the peroxisomal lumen. This transport is accompanied by a proton transport from the peroxisomal lumen to the cytosol. Transport of ATP into the peroxisome is required for beta-oxidation of medium-chain fatty acids. This Eremothecium gossypii (strain ATCC 10895 / CBS 109.51 / FGSC 9923 / NRRL Y-1056) (Yeast) protein is Peroxisomal adenine nucleotide transporter 1 (ANT1).